The chain runs to 228 residues: Cutinase CUT1 (228 aa).

The N-terminal stretch at 1–16 is a signal peptide; that stretch reads MQFITVALTLIALASA. Residues Cys49 and Cys127 are joined by a disulfide bond. Catalysis depends on Ser138, which acts as the Nucleophile. A disulfide bond links Cys189 and Cys196. Asn190 is a glycosylation site (N-linked (GlcNAc...) asparagine). Asp193 is a catalytic residue. His206 serves as the catalytic Proton donor/acceptor.

It belongs to the cutinase family. The 2 disulfide bonds play a critical role in holding the catalytic residues in juxta-position; reduction of the disulfide bridges results in the complete inactivation of the enzyme.

The protein resides in the secreted. It catalyses the reaction cutin + H2O = cutin monomers.. Catalyzes the hydrolysis of complex carboxylic polyesters found in the cell wall of plants. Degrades cutin, a macromolecule that forms the structure of the plant cuticle. Required for efficient penetration of the host plant cuticle by the appressorium during the initial stage of fungal infection. The chain is Cutinase CUT1 from Pyricularia oryzae (strain 70-15 / ATCC MYA-4617 / FGSC 8958) (Rice blast fungus).